A 114-amino-acid chain; its full sequence is Hydrogenase maturation factor HypA (114 aa).

His-2 lines the Ni(2+) pocket. Residues Cys-73, Cys-76, Cys-90, and Cys-93 each contribute to the Zn(2+) site.

This sequence belongs to the HypA/HybF family.

Functionally, involved in the maturation of [NiFe] hydrogenases. Required for nickel insertion into the metal center of the hydrogenase. The chain is Hydrogenase maturation factor HypA from Klebsiella pneumoniae subsp. pneumoniae (strain ATCC 700721 / MGH 78578).